The chain runs to 209 residues: Large ribosomal subunit protein uL3 (209 aa).

The residue at position 150 (Gln150) is an N5-methylglutamine.

Belongs to the universal ribosomal protein uL3 family. Part of the 50S ribosomal subunit. Forms a cluster with proteins L14 and L19. Methylated by PrmB.

One of the primary rRNA binding proteins, it binds directly near the 3'-end of the 23S rRNA, where it nucleates assembly of the 50S subunit. The sequence is that of Large ribosomal subunit protein uL3 from Aliivibrio salmonicida (strain LFI1238) (Vibrio salmonicida (strain LFI1238)).